The chain runs to 231 residues: Cilia- and flagella-associated protein 299 (231 aa).

It localises to the cytoplasm. The protein localises to the nucleus. In terms of biological role, may be involved in spermatogenesis. This chain is Cilia- and flagella-associated protein 299, found in Bos taurus (Bovine).